The primary structure comprises 412 residues: DnaJ homolog subfamily A member 2 (412 aa).

The J domain maps to 8-70 (KLYDILGVPP…EKRELYDRYG (63 aa)). The residue at position 39 (Lys-39) is an N6-acetyllysine. Residues Ser-78 and Ser-123 each carry the phosphoserine modification. The segment at 130–214 (GKTTKLQLSK…CEGKKVIKEV (85 aa)) adopts a CR-type zinc-finger fold. Lys-134 is covalently cross-linked (Glycyl lysine isopeptide (Lys-Gly) (interchain with G-Cter in SUMO2)). Cys-143 and Cys-146 together coordinate Zn(2+). The stretch at 143 to 150 (CSACSGQG) is one CXXCXGXG motif repeat. Lys-152 carries the post-translational modification N6-acetyllysine. 6 residues coordinate Zn(2+): Cys-159, Cys-162, Cys-186, Cys-189, Cys-202, and Cys-205. 3 CXXCXGXG motif repeats span residues 159–166 (CSACRGRG), 186–193 (CSDCNGEG), and 202–209 (CKKCEGKK). The tract at residues 365–412 (IGETEEVELQEFDSTRGSGGGQRREAYNDSSDEESSSHHGPGVQCAHQ) is disordered. Residue Tyr-391 is modified to Phosphotyrosine. 2 positions are modified to phosphoserine: Ser-394 and Ser-395. The residue at position 409 (Cys-409) is a Cysteine methyl ester. The S-farnesyl cysteine moiety is linked to residue Cys-409. A propeptide spans 410-412 (AHQ) (removed in mature form).

Its subcellular location is the membrane. In terms of biological role, co-chaperone of Hsc70. Stimulates ATP hydrolysis and the folding of unfolded proteins mediated by HSPA1A/B (in vitro). The polypeptide is DnaJ homolog subfamily A member 2 (Dnaja2) (Mus musculus (Mouse)).